The sequence spans 372 residues: Peptide chain release factor 1 (372 aa).

Q237 carries the post-translational modification N5-methylglutamine.

The protein belongs to the prokaryotic/mitochondrial release factor family. Methylated by PrmC. Methylation increases the termination efficiency of RF1.

It is found in the cytoplasm. Functionally, peptide chain release factor 1 directs the termination of translation in response to the peptide chain termination codons UAG and UAA. The protein is Peptide chain release factor 1 of Anaeromyxobacter sp. (strain Fw109-5).